We begin with the raw amino-acid sequence, 242 residues long: Small ribosomal subunit protein uS2 (242 aa).

It belongs to the universal ribosomal protein uS2 family.

In Vibrio campbellii (strain ATCC BAA-1116), this protein is Small ribosomal subunit protein uS2.